Consider the following 302-residue polypeptide: Sulfate adenylyltransferase subunit 2 (302 aa).

This sequence belongs to the PAPS reductase family. CysD subfamily. Heterodimer composed of CysD, the smaller subunit, and CysN.

The catalysed reaction is sulfate + ATP + H(+) = adenosine 5'-phosphosulfate + diphosphate. It functions in the pathway sulfur metabolism; hydrogen sulfide biosynthesis; sulfite from sulfate: step 1/3. In terms of biological role, with CysN forms the ATP sulfurylase (ATPS) that catalyzes the adenylation of sulfate producing adenosine 5'-phosphosulfate (APS) and diphosphate, the first enzymatic step in sulfur assimilation pathway. APS synthesis involves the formation of a high-energy phosphoric-sulfuric acid anhydride bond driven by GTP hydrolysis by CysN coupled to ATP hydrolysis by CysD. The sequence is that of Sulfate adenylyltransferase subunit 2 from Yersinia pestis bv. Antiqua (strain Nepal516).